The primary structure comprises 246 residues: V-type proton ATPase subunit D 1 (246 aa).

This sequence belongs to the V-ATPase D subunit family. In terms of assembly, V-ATPase is a heteromultimeric enzyme made up of two complexes: the ATP-hydrolytic V1 complex and the proton translocation V0 complex. The V1 complex consists of three catalytic AB heterodimers that form a heterohexamer, three peripheral stalks each consisting of EG heterodimers, one central rotor including subunits D and F, and the regulatory subunits C and H. The proton translocation complex V0 consists of the proton transport subunit a, a ring of proteolipid subunits c9c'', rotary subunit d, subunits e and f, and the accessory subunits VhaAC45 and ATP6AP2.

In terms of biological role, subunit of the V1 complex of vacuolar(H+)-ATPase (V-ATPase), a multisubunit enzyme composed of a peripheral complex (V1) that hydrolyzes ATP and a membrane integral complex (V0) that translocates protons. V-ATPase is responsible for acidifying and maintaining the pH of intracellular compartments and in some cell types, is targeted to the plasma membrane, where it is responsible for acidifying the extracellular environment. This Drosophila melanogaster (Fruit fly) protein is V-type proton ATPase subunit D 1 (Vha36-1).